Reading from the N-terminus, the 580-residue chain is Isocitrate lyase (580 aa).

Position 106–108 (106–108 (SGW)) interacts with substrate. Mg(2+) is bound at residue Asp-177. The active-site Proton acceptor is Cys-215. Substrate-binding positions include 216 to 217 (GH), Arg-252, 441 to 445 (NLSPS), and Thr-476. The short motif at 578–580 (SRM) is the Microbody targeting signal element.

This sequence belongs to the isocitrate lyase/PEP mutase superfamily. Isocitrate lyase family. Homotetramer. It depends on Mg(2+) as a cofactor.

The protein resides in the glyoxysome. It catalyses the reaction D-threo-isocitrate = glyoxylate + succinate. The protein operates within carbohydrate metabolism; glyoxylate cycle; (S)-malate from isocitrate: step 1/2. In terms of biological role, involved in storage lipid mobilization during the growth of higher plant seedling. The polypeptide is Isocitrate lyase (ICL 8) (Pinus taeda (Loblolly pine)).